The primary structure comprises 106 residues: UPF0145 protein PP_2873 (106 aa).

This sequence belongs to the UPF0145 family.

The polypeptide is UPF0145 protein PP_2873 (Pseudomonas putida (strain ATCC 47054 / DSM 6125 / CFBP 8728 / NCIMB 11950 / KT2440)).